The chain runs to 119 residues: Small ribosomal subunit protein uS10 (119 aa).

The protein belongs to the universal ribosomal protein uS10 family. As to quaternary structure, component of the small ribosomal subunit. Mature ribosomes consist of a small (40S) and a large (60S) subunit. The 40S subunit contains about 32 different proteins and 1 molecule of RNA (18S). The 60S subunit contains 45 different proteins and 3 molecules of RNA (25S, 5.8S and 5S).

It is found in the cytoplasm. Component of the ribosome, a large ribonucleoprotein complex responsible for the synthesis of proteins in the cell. The small ribosomal subunit (SSU) binds messenger RNAs (mRNAs) and translates the encoded message by selecting cognate aminoacyl-transfer RNA (tRNA) molecules. The large subunit (LSU) contains the ribosomal catalytic site termed the peptidyl transferase center (PTC), which catalyzes the formation of peptide bonds, thereby polymerizing the amino acids delivered by tRNAs into a polypeptide chain. The nascent polypeptides leave the ribosome through a tunnel in the LSU and interact with protein factors that function in enzymatic processing, targeting, and the membrane insertion of nascent chains at the exit of the ribosomal tunnel. The polypeptide is Small ribosomal subunit protein uS10 (RPS20) (Candida albicans (strain SC5314 / ATCC MYA-2876) (Yeast)).